The primary structure comprises 201 residues: Iron-sulfur flavoprotein AF_1896 (201 aa).

[4Fe-4S] cluster is bound by residues Cys46, Cys49, Cys52, and Cys57.

The protein belongs to the SsuE family. Isf subfamily. As to quaternary structure, homodimer. Requires FMN as cofactor. [4Fe-4S] cluster serves as cofactor.

In terms of biological role, redox-active protein probably involved in electron transport. This is Iron-sulfur flavoprotein AF_1896 from Archaeoglobus fulgidus (strain ATCC 49558 / DSM 4304 / JCM 9628 / NBRC 100126 / VC-16).